Reading from the N-terminus, the 245-residue chain is 3-deoxy-manno-octulosonate cytidylyltransferase (245 aa).

The protein belongs to the KdsB family.

It localises to the cytoplasm. The catalysed reaction is 3-deoxy-alpha-D-manno-oct-2-ulosonate + CTP = CMP-3-deoxy-beta-D-manno-octulosonate + diphosphate. The protein operates within nucleotide-sugar biosynthesis; CMP-3-deoxy-D-manno-octulosonate biosynthesis; CMP-3-deoxy-D-manno-octulosonate from 3-deoxy-D-manno-octulosonate and CTP: step 1/1. It participates in bacterial outer membrane biogenesis; lipopolysaccharide biosynthesis. Its function is as follows. Activates KDO (a required 8-carbon sugar) for incorporation into bacterial lipopolysaccharide in Gram-negative bacteria. This chain is 3-deoxy-manno-octulosonate cytidylyltransferase, found in Rhodopseudomonas palustris (strain BisB5).